Consider the following 689-residue polypeptide: Glycine--tRNA ligase beta subunit (689 aa).

This sequence belongs to the class-II aminoacyl-tRNA synthetase family. As to quaternary structure, tetramer of two alpha and two beta subunits.

It is found in the cytoplasm. The catalysed reaction is tRNA(Gly) + glycine + ATP = glycyl-tRNA(Gly) + AMP + diphosphate. In Enterobacter sp. (strain 638), this protein is Glycine--tRNA ligase beta subunit.